Reading from the N-terminus, the 427-residue chain is Adenylosuccinate synthetase (427 aa).

GTP contacts are provided by residues 12 to 18 (GDEGKGK) and 40 to 42 (GHT). Catalysis depends on Asp13, which acts as the Proton acceptor. Mg(2+)-binding residues include Asp13 and Gly40. IMP-binding positions include 13–16 (DEGK), 38–41 (NAGH), Thr131, Arg145, Gln226, Thr241, and Arg305. Catalysis depends on His41, which acts as the Proton donor. 301–307 (ATTGRKR) is a substrate binding site. GTP is bound by residues Arg307, 333–335 (KLD), and 415–417 (SVG).

It belongs to the adenylosuccinate synthetase family. Homodimer. Requires Mg(2+) as cofactor.

It localises to the cytoplasm. It carries out the reaction IMP + L-aspartate + GTP = N(6)-(1,2-dicarboxyethyl)-AMP + GDP + phosphate + 2 H(+). Its pathway is purine metabolism; AMP biosynthesis via de novo pathway; AMP from IMP: step 1/2. In terms of biological role, plays an important role in the de novo pathway of purine nucleotide biosynthesis. Catalyzes the first committed step in the biosynthesis of AMP from IMP. The sequence is that of Adenylosuccinate synthetase from Oleidesulfovibrio alaskensis (strain ATCC BAA-1058 / DSM 17464 / G20) (Desulfovibrio alaskensis).